Here is a 379-residue protein sequence, read N- to C-terminus: MPTVFPDDSVGLVSPQTLHFNEPLELTSGKSLAEYDLVIETYGELNATQSNAVLICHALSGHHHAAGYHSVDERKPGWWDSCIGPGKPIDTRKFFVVALNNLGGCNGSSGPASINPATGKVYGADFPMVTVEDWVHSQARLADRLGIRQWAAVVGGSLGGMQALQWTISYPERVRHCLCIASAPKLSAQNIAFNEVARQATLSDPEFLGGYFQEQGVIPKRGLKLARMVGHITYLSDDAMGAKFGRVLKTEKLNYDLHSVEFQVESYLRYQGEEFSTRFDANTYLLMTKALDYFDPAAAHGDDLVRTLEGVEADFCLMSFTTDWRFSPARSREIVDALIAAKKNVSYLEIDAPQGHDAFLMPIPRYLQAFSGYMNRISV.

Positions 51 to 360 (NAVLICHALS…DAPQGHDAFL (310 aa)) constitute an AB hydrolase-1 domain. Serine 157 (nucleophile) is an active-site residue. Residue arginine 227 participates in substrate binding. Catalysis depends on residues aspartate 323 and histidine 356. Residue aspartate 357 coordinates substrate.

The protein belongs to the AB hydrolase superfamily. MetX family. As to quaternary structure, homodimer.

The protein localises to the cytoplasm. It carries out the reaction L-homoserine + succinyl-CoA = O-succinyl-L-homoserine + CoA. It functions in the pathway amino-acid biosynthesis; L-methionine biosynthesis via de novo pathway; O-succinyl-L-homoserine from L-homoserine: step 1/1. Its function is as follows. Transfers a succinyl group from succinyl-CoA to L-homoserine, forming succinyl-L-homoserine. This Pseudomonas aeruginosa (strain LESB58) protein is Homoserine O-succinyltransferase.